A 346-amino-acid chain; its full sequence is GTP 3',8-cyclase (346 aa).

Residues 10 to 240 (QRSRPLRVLR…VTRIRARWPL (231 aa)) form the Radical SAM core domain. R19 contributes to the GTP binding site. [4Fe-4S] cluster is bound by residues C26 and C30. An S-adenosyl-L-methionine-binding site is contributed by Y32. Residue C33 participates in [4Fe-4S] cluster binding. Residue R65 participates in GTP binding. G69 serves as a coordination point for S-adenosyl-L-methionine. T104 contacts GTP. Position 129 (S129) interacts with S-adenosyl-L-methionine. Residue K177 coordinates GTP. An S-adenosyl-L-methionine-binding site is contributed by M211. Residues C274 and C277 each contribute to the [4Fe-4S] cluster site. 279 to 281 (RLR) is a GTP binding site. C291 contributes to the [4Fe-4S] cluster binding site. Residues 326–346 (SDERQQTTGSMPHAEMAYLGG) are disordered.

Belongs to the radical SAM superfamily. MoaA family. In terms of assembly, monomer and homodimer. [4Fe-4S] cluster is required as a cofactor.

The enzyme catalyses GTP + AH2 + S-adenosyl-L-methionine = (8S)-3',8-cyclo-7,8-dihydroguanosine 5'-triphosphate + 5'-deoxyadenosine + L-methionine + A + H(+). It functions in the pathway cofactor biosynthesis; molybdopterin biosynthesis. Its function is as follows. Catalyzes the cyclization of GTP to (8S)-3',8-cyclo-7,8-dihydroguanosine 5'-triphosphate. This Parasynechococcus marenigrum (strain WH8102) protein is GTP 3',8-cyclase.